The primary structure comprises 402 residues: Multidrug resistance protein MdtH (402 aa).

The Cytoplasmic segment spans residues 1–12; that stretch reads MSRVSQARNLGK. A helical membrane pass occupies residues 13–33; it reads YFLLIDNMLVVLGFFVVFPLI. Over 34 to 98 the chain is Periplasmic; it reads SIRFVDQMGW…GFATMGIAHE (65 aa). Residues 99-116 traverse the membrane as a helical segment; it reads PWLLWFSCLLSGLGGTLF. The Cytoplasmic portion of the chain corresponds to 117–138; the sequence is DPPRSALVVKLIRPQQRGRFFS. Residues 139-159 traverse the membrane as a helical segment; sequence LLMMQDSAGAVIGALLGSWLL. The Periplasmic portion of the chain corresponds to 160-164; that stretch reads QYDFR. Residues 165 to 185 form a helical membrane-spanning segment; that stretch reads LVCATGAVLFVLCAAFNAWLL. At 186-213 the chain is on the cytoplasmic side; sequence PAWKLSTVRTPVREGMTRVMRDKRFVTY. A helical transmembrane segment spans residues 214-234; it reads VLTLAGYYMLAVQVMLMLPIM. Topologically, residues 235 to 243 are periplasmic; sequence VNDVAGAPS. The chain crosses the membrane as a helical span at residues 244–264; it reads AVKWMYAIEACLSLTLLYPIA. The Cytoplasmic segment spans residues 265-276; sequence RWSEKHFRLEHR. The helical transmembrane segment at 277–297 threads the bilayer; it reads LMAGLLIMSLSMMPVGMVSGL. At 298-299 the chain is on the periplasmic side; the sequence is QQ. Residues 300–320 form a helical membrane-spanning segment; the sequence is LFTLICLFYIGSIIAEPARET. At 321-339 the chain is on the cytoplasmic side; it reads LSASLADARARGSYMGFSR. A helical transmembrane segment spans residues 340-360; it reads LGLAIGGAIGYIGGGWLFDLG. Residues 361–367 are Periplasmic-facing; that stretch reads KSVHQPE. Residues 368 to 388 traverse the membrane as a helical segment; it reads LPWMMLGIIGIFTFLALGWQF. Topologically, residues 389-402 are cytoplasmic; that stretch reads SQKRAARRLLERDA.

It belongs to the major facilitator superfamily. DHA1 family. MdtH (TC 2.A.1.2.21) subfamily.

The protein localises to the cell inner membrane. Functionally, confers resistance to norfloxacin and enoxacin. The chain is Multidrug resistance protein MdtH from Escherichia coli O157:H7.